The primary structure comprises 210 residues: Adenylate kinase (210 aa).

Gly10–Thr15 provides a ligand contact to ATP. Positions Ser30 to Ile54 are NMP. Residues Arg36, Glu52–Ile54, Gly80–Arg83, and Gln87 contribute to the AMP site. The segment at Gly117–Asp154 is LID. ATP is bound by residues Arg118 and Ile127–Tyr128. AMP is bound by residues Arg151 and Arg162. Phe195 serves as a coordination point for ATP.

This sequence belongs to the adenylate kinase family. In terms of assembly, monomer.

It is found in the cytoplasm. The catalysed reaction is AMP + ATP = 2 ADP. It participates in purine metabolism; AMP biosynthesis via salvage pathway; AMP from ADP: step 1/1. Catalyzes the reversible transfer of the terminal phosphate group between ATP and AMP. Plays an important role in cellular energy homeostasis and in adenine nucleotide metabolism. This Wigglesworthia glossinidia brevipalpis protein is Adenylate kinase.